We begin with the raw amino-acid sequence, 239 residues long: MMIEDDTGFVLHARAYRETSLLVEVLSAQHGRVGLLARGVSTAKGQVLRAALQPLQWIRFSAQQRGELAQLRGAEALDAAPRLVGQAMLAGFYLSELTLRLAPRQDPLPELYLAYGEARARLAVGAGLAWTLRRFERELLTALGLGFELDSASDGQPIDPAARYELDPQEGAQRLLSERGGERRAAATGSALLALAADEEPAAADLASLRLPMRRVLAHHLGPRGLKSWEMLEQLAPRR.

The protein belongs to the RecO family.

In terms of biological role, involved in DNA repair and RecF pathway recombination. In Stenotrophomonas maltophilia (strain K279a), this protein is DNA repair protein RecO.